The following is a 507-amino-acid chain: MATLRVDEINKILRERIEQYNRKVGIENIGRVVQVGDGIARIIGLGEIMSGELVEFAEGTRGIALNLESKNVGIVLMGDGLMIQEGSFVKATGRIAQIPVSEAYLGRVINALAKPIDGRGEIVASESRLIESPAPGIISRRSVYEPLQTGLIAIDSMIPIGRGQRELIIGDRQTGKTAVATDTILNQKGQDVICVYVAIGQRASSVAQVVTTFHEEGAMEYTIVVAEMADSPATLQYLAPYTGAALAEYFMYRERHTLIIYDDLSKQAQAYRQMSLLLRRPPGREAYPGDVFYLHSRLLERAAKFNSLLGEGSMTALPIVETQSGDVSAYIPTNVISITDGQIFLSADLFNAGIRPAINVGISVSRVGSAAQIKAMKQVAGKLKLELAQFAELQAFAQFASALDKTSQNQLARGRRLRELLKQSQSNPLPVEEQVATIYTGTRGYLDSLEIEQVKKFLDELRKHLKDTKPQFQEIISSSKTFTEQAETLLKEAIQEQLERFSLQEQT.

I169 to K176 lines the ATP pocket.

The protein belongs to the ATPase alpha/beta chains family. As to quaternary structure, F-type ATPases have 2 components, CF(1) - the catalytic core - and CF(0) - the membrane proton channel. CF(1) has five subunits: alpha(3), beta(3), gamma(1), delta(1), epsilon(1). CF(0) has four main subunits: a, b, b' and c.

The protein resides in the plastid. It localises to the chloroplast thylakoid membrane. It carries out the reaction ATP + H2O + 4 H(+)(in) = ADP + phosphate + 5 H(+)(out). Functionally, produces ATP from ADP in the presence of a proton gradient across the membrane. The alpha chain is a regulatory subunit. The chain is ATP synthase subunit alpha, chloroplastic from Saccharum hybrid (Sugarcane).